Here is a 315-residue protein sequence, read N- to C-terminus: Probable diguanylate cyclase DgcF (315 aa).

Helical transmembrane passes span 10 to 30 (FSTG…GVLP), 41 to 61 (IALI…SLAF), 80 to 100 (LLTF…VIDI), and 116 to 136 (LGIA…AAIN). The region spanning 173 to 310 (QHLTVMLLDI…GRNRTSTMRY (138 aa)) is the GGDEF domain. 2 residues coordinate Mg(2+): Asp-181 and Ile-182. 3 residues coordinate substrate: Asn-189, His-194, and Asp-198. Glu-224 is a Mg(2+) binding site.

Homodimer. Mg(2+) is required as a cofactor.

It is found in the cell membrane. The enzyme catalyses 2 GTP = 3',3'-c-di-GMP + 2 diphosphate. It functions in the pathway purine metabolism; 3',5'-cyclic di-GMP biosynthesis. Catalyzes the synthesis of cyclic-di-GMP (c-di-GMP) via the condensation of 2 GTP molecules. The protein is Probable diguanylate cyclase DgcF of Escherichia coli (strain K12).